The chain runs to 248 residues: Eukaryotic translation initiation factor 6 (248 aa).

Belongs to the eIF-6 family. In terms of assembly, monomer. Associates with the 60S ribosomal subunit.

The protein localises to the cytoplasm. It is found in the nucleus. It localises to the nucleolus. Binds to the 60S ribosomal subunit and prevents its association with the 40S ribosomal subunit to form the 80S initiation complex in the cytoplasm. May also be involved in ribosome biogenesis. The protein is Eukaryotic translation initiation factor 6 of Trypanosoma cruzi (strain CL Brener).